Consider the following 2147-residue polypeptide: Non-reducing polyketide synthase albA (2147 aa).

The N-terminal acylcarrier protein transacylase domain (SAT) stretch occupies residues 8–244; sequence YLFGDQTSDI…VKAPIHGPYH (237 aa). The Ketosynthase family 3 (KS3) domain maps to 375–806; that stretch reads CSKIAIIGMS…GGNTAILLED (432 aa). Residues C547, H682, and H724 each act as for beta-ketoacyl synthase activity in the active site. The malonyl-CoA:ACP transacylase (MAT) domain stretch occupies residues 912 to 1232; the sequence is FVFTGQGAQY…LSSLHLAGID (321 aa). S1001 serves as the catalytic For acyl/malonyl transferase activity. Residues 1286–1425 are N-terminal hotdog fold; that stretch reads HEFLTTAAQK…CTVRFFDCAA (140 aa). A PKS/mFAS DH domain is found at 1286–1598; the sequence is HEFLTTAAQK…FQGLSRKILD (313 aa). The interval 1290-1603 is product template (PT) domain; the sequence is TTAAQKVIET…RKILDTVLPP (314 aa). The Proton acceptor; for dehydratase activity role is filled by H1326. Residues 1452 to 1598 are C-terminal hotdog fold; sequence DAHRLGRGMV…FQGLSRKILD (147 aa). D1511 (proton donor; for dehydratase activity) is an active-site residue. Positions 1608-1637 are disordered; that stretch reads KGPARPAASAQKAAPAATSKSRASAPAPAK. Residues 1610-1637 show a composition bias toward low complexity; that stretch reads PARPAASAQKAAPAATSKSRASAPAPAK. The 78-residue stretch at 1642 to 1719 folds into the Carrier 1 domain; the sequence is PSAPSLVKRA…DFKQFLAPMS (78 aa). Residue S1679 is modified to O-(pantetheine 4'-phosphoryl)serine. A disordered region spans residues 1719–1759; that stretch reads SQGEASDGSTSDPESSSSFNGGSSTDESSAGSPVSSPPNEK. Low complexity predominate over residues 1724–1747; sequence SDGSTSDPESSSSFNGGSSTDESS. Residues 1760–1837 enclose the Carrier 2 domain; that stretch reads IEQHATMKEI…DVEDALGLKP (78 aa). At S1797 the chain carries O-(pantetheine 4'-phosphoryl)serine. Residues 1873–2145 form a claisen cyclase domain region; that stretch reads SPHPRSTSIL…ELGSFIGNAM (273 aa). The active-site For Claisen cyclase activity is S1963.

It catalyses the reaction 6 malonyl-CoA + acetyl-CoA + 6 H(+) = naphtopyrone YWA1 + 6 CO2 + 7 CoA + H2O. Its pathway is secondary metabolite biosynthesis. Its function is as follows. Non-reducing polyketide synthase involved in the biosynthesis of bifonsecin B, a dimeric gamma-naphthopyrone. The first step in the biosynthesis of bifonsecin B is the production of gamma-naphthopyrone precursor YWA1 by the non-reducing polyketide synthase albA, via condensation of one acetyl-CoA starter unit with 6 malonyl-CoA units. YWA1 is then methylated by bfoE at position C-6 to yield foncesin which is further methylated at position C-8 by bfoD to produce fonsecin B. A key enzyme in the biosynthetic pathway is the cytochrome P450 monooxygenase bfoB which catalyzes the oxidative dimerization of fonsecin B to bifonsecin B. Bfob also catalyzes the oxidative dimerization of rubrofusarin B into nigerone. The stereoselectivity of bfoB is influenced by the two natural monomeric substrates; homodimerization of fonsecin B yields a stereochemically pure biaryl, M-foncerine B, while rubrofusarin B yields a mixture of enantiomers M- and P-nigerone. The protein is Non-reducing polyketide synthase albA of Aspergillus brasiliensis (strain CBS 101740 / IMI 381727 / IBT 21946).